Consider the following 602-residue polypeptide: Transcription factor COE4 (602 aa).

The interval 64–67 (RKSN) is interaction with DNA. Residues 152 to 171 (CRVLLTHEIMCSRCCDRKSC) form a C5-type zinc finger. Interaction with DNA regions lie at residues 198–205 (NCLKNAGN) and 237–240 (NNSK). One can recognise an IPT/TIG domain in the interval 256–338 (PCIKAISPGE…CKGCPGRFVY (83 aa)). Disordered regions lie at residues 448–476 (PEPGYARSCSSASPRGFAPSPGSQQSGYG) and 558–602 (PVLR…LAYS). The segment covering 560–569 (LRPPSSPPQA) has biased composition (pro residues).

The protein belongs to the COE family. Forms either a homodimer or a heterodimer with a related family member. Interacts with MAPK3/ERK1. Interacts with STAT5A. In terms of tissue distribution, most highly expressed in cytotoxic NK cells, especially CD16(+) NK cells, followed by CD8(+) T-cells.

It is found in the nucleus. Functionally, transcription factor. Binds to specific sequence motif 5'-CCCNNG[GA]G-3' in regulatory elements of putative target immunoregulatory genes such as NKG7, GZMA, and TBX21. Positively modulates transcription of NKG7. May play a role in regulating FAS/CD95-mediated apoptosis in cytotoxic NK cells and T-cells, probably downstream of interleukin IL2 signaling. This is Transcription factor COE4 (EBF4) from Homo sapiens (Human).